Here is a 1097-residue protein sequence, read N- to C-terminus: DNA-directed RNA polymerase subunit beta (1097 aa).

The tract at residues 1072-1097 is disordered; that stretch reads QDVNPRRSTPSRPTYESLGVADYDED.

Belongs to the RNA polymerase beta chain family. In cyanobacteria the RNAP catalytic core is composed of 2 alpha, 1 beta, 1 beta', 1 gamma and 1 omega subunit. When a sigma factor is associated with the core the holoenzyme is formed, which can initiate transcription.

The enzyme catalyses RNA(n) + a ribonucleoside 5'-triphosphate = RNA(n+1) + diphosphate. Its function is as follows. DNA-dependent RNA polymerase catalyzes the transcription of DNA into RNA using the four ribonucleoside triphosphates as substrates. The chain is DNA-directed RNA polymerase subunit beta from Synechococcus sp. (strain CC9605).